The chain runs to 329 residues: N-acetyl-gamma-glutamyl-phosphate reductase (329 aa).

Cysteine 155 is an active-site residue.

Belongs to the NAGSA dehydrogenase family. Type 1 subfamily.

It is found in the cytoplasm. The enzyme catalyses N-acetyl-L-glutamate 5-semialdehyde + phosphate + NADP(+) = N-acetyl-L-glutamyl 5-phosphate + NADPH + H(+). It participates in amino-acid biosynthesis; L-arginine biosynthesis; N(2)-acetyl-L-ornithine from L-glutamate: step 3/4. Catalyzes the NADPH-dependent reduction of N-acetyl-5-glutamyl phosphate to yield N-acetyl-L-glutamate 5-semialdehyde. The chain is N-acetyl-gamma-glutamyl-phosphate reductase from Shewanella pealeana (strain ATCC 700345 / ANG-SQ1).